An 857-amino-acid chain; its full sequence is Dimethylglycine dehydrogenase, mitochondrial (857 aa).

A mitochondrion-targeting transit peptide spans 1 to 43 (MLRLGALRLRGLALRSSQGRPSSAGLREGQESPPSPPEWKDRA). Positions 15–39 (RSSQGRPSSAGLREGQESPPSPPEW) are disordered. Residues 52-53 (CV), 73-74 (EK), and 80-88 (GSTWHAAGL) contribute to the FAD site. The residue at position 84 (His84) is a Tele-8alpha-FAD histidine. Lys107 is subject to N6-acetyllysine. Residue Lys141 is modified to N6-acetyllysine; alternate. Residue Lys141 is modified to N6-succinyllysine; alternate. Lys161 bears the N6-acetyllysine mark. Residue Val212 participates in FAD binding. Position 216 is an N6-acetyllysine (Lys216). Trp244 is an FAD binding site. Lys310 and Lys312 each carry N6-succinyllysine. Lys328 and Lys353 each carry N6-acetyllysine. 390–395 (FGYGII) contributes to the FAD binding site. An N6-acetyllysine; alternate mark is found at Lys427, Lys469, and Lys516. N6-succinyllysine; alternate is present on residues Lys427, Lys469, and Lys516. Position 573-575 (573-575 (ELT)) interacts with (6S)-5,6,7,8-tetrahydrofolate. Lys648 is modified (N6-acetyllysine; alternate). An N6-succinyllysine; alternate modification is found at Lys648. (6S)-5,6,7,8-tetrahydrofolate is bound by residues Tyr669, 676 to 678 (ELY), and Tyr737. Lys757 bears the N6-acetyllysine mark. Lys786 is subject to N6-acetyllysine; alternate. Lys786 is modified (N6-succinyllysine; alternate). At Lys788 the chain carries N6-succinyllysine.

Belongs to the GcvT family. The cofactor is FAD.

It localises to the mitochondrion. The catalysed reaction is (6S)-5,6,7,8-tetrahydrofolyl-(gamma-L-Glu)(n) + N,N-dimethylglycine + oxidized [electron-transfer flavoprotein] + H(+) = (6R)-5,10-methylenetetrahydrofolyl-(gamma-L-Glu)(n) + sarcosine + reduced [electron-transfer flavoprotein]. It participates in amine and polyamine degradation; betaine degradation; sarcosine from betaine: step 2/2. Functionally, catalyzes the demethylation of N,N-dimethylglycine to sarcosine. Also has activity with sarcosine in vitro. This Rattus norvegicus (Rat) protein is Dimethylglycine dehydrogenase, mitochondrial (Dmgdh).